Here is a 118-residue protein sequence, read N- to C-terminus: Large ribosomal subunit protein bL20 (118 aa).

The protein belongs to the bacterial ribosomal protein bL20 family.

Functionally, binds directly to 23S ribosomal RNA and is necessary for the in vitro assembly process of the 50S ribosomal subunit. It is not involved in the protein synthesizing functions of that subunit. The protein is Large ribosomal subunit protein bL20 of Aliarcobacter butzleri (strain RM4018) (Arcobacter butzleri).